Reading from the N-terminus, the 383-residue chain is Flagellum-associated coiled-coil domain-containing protein 1 (383 aa).

The tract at residues 26 to 79 (PYPLPKHPTGKFKPVLPPPISKEHNSLLSQPGKSTVSPRDKVQSGNTESSKAPS) is disordered. Residues 51–77 (SLLSQPGKSTVSPRDKVQSGNTESSKA) are compositionally biased toward polar residues. Coiled-coil stretches lie at residues 125-220 (TDII…YLKS) and 276-359 (KKMN…FQTK). Position 354 is an N6-acetyllysine (K354).

In terms of tissue distribution, isoform 1 is specific to germ cells of the testis and localizes to the principal piece of the sperm flagellum. Isoform 2 seems to be expressed mainly in somatic cells of the testis, and is not detected in mature spermatozoa (at protein level). Isoform 2 may also be expressed weakly in brain.

The protein localises to the cytoplasm. It is found in the cytoplasmic granule. Its subcellular location is the cell projection. The protein resides in the cilium. It localises to the flagellum. The sequence is that of Flagellum-associated coiled-coil domain-containing protein 1 from Mus musculus (Mouse).